The following is a 178-amino-acid chain: MARLKSLYNEELKQQIKEELGLANVMQVPKITKITLNMGVGGASQDKKLLEGAVADMTAIAGQKPVVTKARKSVAGFKIREEWPIGCKVTLRGEQMYEFLDRLIAIAIPRIRDFRGFSPKAFDGRGNYSLGIKEQIVFPEVDFDKIDRIRGMDVTITTSAQSDEEGRALLKAFGFPFK.

The protein belongs to the universal ribosomal protein uL5 family. In terms of assembly, part of the 50S ribosomal subunit; part of the 5S rRNA/L5/L18/L25 subcomplex. Contacts the 5S rRNA and the P site tRNA. Forms a bridge to the 30S subunit in the 70S ribosome.

Its function is as follows. This is one of the proteins that bind and probably mediate the attachment of the 5S RNA into the large ribosomal subunit, where it forms part of the central protuberance. In the 70S ribosome it contacts protein S13 of the 30S subunit (bridge B1b), connecting the 2 subunits; this bridge is implicated in subunit movement. Contacts the P site tRNA; the 5S rRNA and some of its associated proteins might help stabilize positioning of ribosome-bound tRNAs. The protein is Large ribosomal subunit protein uL5 of Psychrobacter cryohalolentis (strain ATCC BAA-1226 / DSM 17306 / VKM B-2378 / K5).